The primary structure comprises 282 residues: High mobility group nucleosome-binding domain-containing protein 5 (282 aa).

Residues 1–282 are disordered; it reads MPKRKAAGQG…GKKEEPQSIV (282 aa). The residue at position 31 (threonine 31) is a Phosphothreonine. Basic residues predominate over residues 37-46; it reads KRTSSSRKMK. A Glycyl lysine isopeptide (Lys-Gly) (interchain with G-Cter in SUMO2) cross-link involves residue lysine 67. A Phosphotyrosine modification is found at tyrosine 76. Residues 81 to 119 are compositionally biased toward basic and acidic residues; sequence KNGEAKITEAPASEKEIVEVKEENIEDATEKGGEKKEAV. The residue at position 93 (serine 93) is a Phosphoserine. Residue lysine 101 forms a Glycyl lysine isopeptide (Lys-Gly) (interchain with G-Cter in SUMO1); alternate linkage. Lysine 101 is covalently cross-linked (Glycyl lysine isopeptide (Lys-Gly) (interchain with G-Cter in SUMO2); alternate). Residue lysine 124 forms a Glycyl lysine isopeptide (Lys-Gly) (interchain with G-Cter in SUMO2) linkage. The segment covering 125–138 has biased composition (acidic residues); it reads NEEEDQKEDEEDQN. Composition is skewed to basic and acidic residues over residues 139 to 152 and 158 to 256; these read EEKG…KDEK and KEDK…KEDL. The span at 257–270 shows a compositional bias: acidic residues; that stretch reads KEEEEGKEEDEIKE. Residues 271–282 are compositionally biased toward basic and acidic residues; that stretch reads DDGKKEEPQSIV.

It belongs to the HMGN family. In terms of tissue distribution, ubiquitously expressed.

The protein localises to the nucleus. Its function is as follows. Preferentially binds to euchromatin and modulates cellular transcription by counteracting linker histone-mediated chromatin compaction. This is High mobility group nucleosome-binding domain-containing protein 5 (HMGN5) from Homo sapiens (Human).